The primary structure comprises 228 residues: 7-cyano-7-deazaguanine synthase (228 aa).

8–18 (LSGGLDSTTCL) is a binding site for ATP. Residues Cys-188, Cys-198, Cys-201, and Cys-204 each contribute to the Zn(2+) site.

It belongs to the QueC family. Zn(2+) serves as cofactor.

The catalysed reaction is 7-carboxy-7-deazaguanine + NH4(+) + ATP = 7-cyano-7-deazaguanine + ADP + phosphate + H2O + H(+). It participates in purine metabolism; 7-cyano-7-deazaguanine biosynthesis. Functionally, catalyzes the ATP-dependent conversion of 7-carboxy-7-deazaguanine (CDG) to 7-cyano-7-deazaguanine (preQ(0)). The polypeptide is 7-cyano-7-deazaguanine synthase (Legionella pneumophila (strain Paris)).